We begin with the raw amino-acid sequence, 238 residues long: Serine protease SplA (238 aa).

An N-terminal signal peptide occupies residues 1–38 (MNKNVMVKGLTALTILTILTSLGFAENISNQPHSIAKA). Residues H77, D116, and S192 each act as charge relay system in the active site.

It belongs to the peptidase S1B family.

The protein localises to the secreted. This Staphylococcus aureus (strain COL) protein is Serine protease SplA (splA).